A 448-amino-acid polypeptide reads, in one-letter code: Tubby-like F-box protein 3 (448 aa).

The region spanning 56 to 102 is the F-box domain; it reads ESRWASLPPELLREVIRRLEADESTWPSRRNVVCFAAVCRTWREMCK. Pro residues predominate over residues 387–403; sequence PSPPPAGAPTPSQPGPA. Residues 387–406 form a disordered region; it reads PSPPPAGAPTPSQPGPADPE.

The protein belongs to the TUB family. Expressed in roots, leaves, flowers and seeds.

The protein is Tubby-like F-box protein 3 (TULP3) of Oryza sativa subsp. japonica (Rice).